Here is a 562-residue protein sequence, read N- to C-terminus: Probable malate:quinone oxidoreductase (562 aa).

This sequence belongs to the MQO family. FAD is required as a cofactor.

The catalysed reaction is (S)-malate + a quinone = a quinol + oxaloacetate. Its pathway is carbohydrate metabolism; tricarboxylic acid cycle; oxaloacetate from (S)-malate (quinone route): step 1/1. In Stenotrophomonas maltophilia (strain K279a), this protein is Probable malate:quinone oxidoreductase.